Consider the following 98-residue polypeptide: MSVVYINIFLAFILSFMGLLVYRSHLMSSLLCLEGMMLSLFVMMTITVLTNHFTLASMTPIILLVFAACEAALGLSLLVMISNTYGTDYVQNLNLLQC.

3 helical membrane passes run 1–21, 30–50, and 61–81; these read MSVV…GLLV, LLCL…TVLT, and IILL…LVMI.

It belongs to the complex I subunit 4L family. Core subunit of respiratory chain NADH dehydrogenase (Complex I) which is composed of 45 different subunits.

The protein localises to the mitochondrion inner membrane. It catalyses the reaction a ubiquinone + NADH + 5 H(+)(in) = a ubiquinol + NAD(+) + 4 H(+)(out). Core subunit of the mitochondrial membrane respiratory chain NADH dehydrogenase (Complex I) which catalyzes electron transfer from NADH through the respiratory chain, using ubiquinone as an electron acceptor. Part of the enzyme membrane arm which is embedded in the lipid bilayer and involved in proton translocation. The chain is NADH-ubiquinone oxidoreductase chain 4L (MT-ND4L) from Lontra canadensis (North American river otter).